A 346-amino-acid polypeptide reads, in one-letter code: Selenoprotein V (346 aa).

Disordered stretches follow at residues 1–40 and 151–206; these read MNNQ…VRTR and LDPP…PGPT. Pro residues predominate over residues 151 to 162; the sequence is LDPPPEPAPELP. The cysteinyl-selenocysteine (Cys-Sec); redox-active cross-link spans 270–273; sequence CGLU. A non-standard amino acid (selenocysteine) is located at residue Sec273.

This sequence belongs to the SelWTH family. In terms of processing, truncated SELENOV proteins produced by failed UGA/Sec decoding are ubiquitinated by the CRL2(APPBP2) complex, which recognizes the glycine (Gly) at the C-terminus of truncated SELENOV proteins. In terms of tissue distribution, testis specific.

May be involved in a redox-related process. In Homo sapiens (Human), this protein is Selenoprotein V.